We begin with the raw amino-acid sequence, 78 residues long: DNA-directed RNA polymerase subunit omega (78 aa).

Belongs to the RNA polymerase subunit omega family. As to quaternary structure, the RNAP catalytic core consists of 2 alpha, 1 beta, 1 beta' and 1 omega subunit. When a sigma factor is associated with the core the holoenzyme is formed, which can initiate transcription.

It catalyses the reaction RNA(n) + a ribonucleoside 5'-triphosphate = RNA(n+1) + diphosphate. Its function is as follows. Promotes RNA polymerase assembly. Latches the N- and C-terminal regions of the beta' subunit thereby facilitating its interaction with the beta and alpha subunits. The polypeptide is DNA-directed RNA polymerase subunit omega (Desulfovibrio desulfuricans (strain ATCC 27774 / DSM 6949 / MB)).